Consider the following 598-residue polypeptide: UvrABC system protein C (598 aa).

One can recognise a GIY-YIG domain in the interval 14–91 (DQPGCYLMKD…IHKNNPKYNI (78 aa)). Residues 196 to 231 (TEIQDRLQEKMAYAAAHMEFEKAAEFRDQIKAIETV) form the UVR domain.

The protein belongs to the UvrC family. Interacts with UvrB in an incision complex.

It localises to the cytoplasm. Its function is as follows. The UvrABC repair system catalyzes the recognition and processing of DNA lesions. UvrC both incises the 5' and 3' sides of the lesion. The N-terminal half is responsible for the 3' incision and the C-terminal half is responsible for the 5' incision. This chain is UvrABC system protein C, found in Enterococcus faecalis (strain ATCC 700802 / V583).